We begin with the raw amino-acid sequence, 448 residues long: MNAHEVNFDGLVGPTHNYGGLSYGNVASQSNSQAVSNPKEAAKQGLAKMKALMEMGFKQGVLAPQARPDTAALRSLGFSGSDEEVIRRAAKEAMPLLAACSSASSMWTANAATVSPSADTADGRVHFTAANLNCKFHRSIEHPTTSRVLAAMFNDERHFAHHAALPAVSQFGDEGAANHTRFCKDYGDAGVEFFVFGRSAFDSRFPAPQRYPARQTLEACQAVARLHGLSEAGVVYAQQNPAVIDQGVFHNDVISVGNGEVLFHHEDAFLDTEKVLAELHDKLGRRGGRFRAICVPRDQVAVEDAVKSYLFNSQLLSKADGSMLLVVPEECRNNPRVWNYLDQLTGDDGPIREVKVFDLKQSMQNGGGPACLRLRVALQERELAAVNPGVIMSAGLYDTLVAWVDRHYRDRLSETDLADPQLLLECRTALDELTQILKLGSVYSFQLD.

Substrate-binding positions include 19–28, N110, and 137–138; these read GGLSYGNVAS and HR. E174 is an active-site residue. Position 214 (R214) interacts with substrate. The active site involves H250. Positions 252 and 365 each coordinate substrate. C371 functions as the Nucleophile in the catalytic mechanism.

Belongs to the succinylarginine dihydrolase family. As to quaternary structure, homodimer.

It carries out the reaction N(2)-succinyl-L-arginine + 2 H2O + 2 H(+) = N(2)-succinyl-L-ornithine + 2 NH4(+) + CO2. It participates in amino-acid degradation; L-arginine degradation via AST pathway; L-glutamate and succinate from L-arginine: step 2/5. Functionally, catalyzes the hydrolysis of N(2)-succinylarginine into N(2)-succinylornithine, ammonia and CO(2). The protein is N-succinylarginine dihydrolase of Pseudomonas aeruginosa (strain LESB58).